The primary structure comprises 479 residues: Sulfate adenylyltransferase subunit 1 (479 aa).

In terms of domain architecture, tr-type G spans 25–239; sequence KSLLRFLTCG…EVLETVDIQR (215 aa). Residues 34-41 are G1; sequence GSVDDGKS. Residue 34 to 41 participates in GTP binding; that stretch reads GSVDDGKS. The G2 stretch occupies residues 92-96; sequence GITID. Residues 113 to 116 form a G3 region; sequence DTPG. GTP-binding positions include 113-117 and 168-171; these read DTPGH and NKMD. The tract at residues 168–171 is G4; sequence NKMD. The tract at residues 206 to 208 is G5; it reads SAL.

This sequence belongs to the TRAFAC class translation factor GTPase superfamily. Classic translation factor GTPase family. CysN/NodQ subfamily. Heterodimer composed of CysD, the smaller subunit, and CysN.

The catalysed reaction is sulfate + ATP + H(+) = adenosine 5'-phosphosulfate + diphosphate. It functions in the pathway sulfur metabolism; hydrogen sulfide biosynthesis; sulfite from sulfate: step 1/3. With CysD forms the ATP sulfurylase (ATPS) that catalyzes the adenylation of sulfate producing adenosine 5'-phosphosulfate (APS) and diphosphate, the first enzymatic step in sulfur assimilation pathway. APS synthesis involves the formation of a high-energy phosphoric-sulfuric acid anhydride bond driven by GTP hydrolysis by CysN coupled to ATP hydrolysis by CysD. This is Sulfate adenylyltransferase subunit 1 from Salmonella arizonae (strain ATCC BAA-731 / CDC346-86 / RSK2980).